Reading from the N-terminus, the 383-residue chain is MAEEEMRKHLVLAKPFSLEDEKDSEHTASNVIRKILSLFKTVRPGSDLTNFQLPPQLNLPRSQLQCYGEMVYSFVGQDLLGECSRRDLPIERLKSVVTWNISTLRPVVFGMSPYNSVLGETHHVSNGHINVIAEQVVHHPPVSALHATHEQENIDVTWCQYFTPKFRGTHVDVEVKGKRVMKLLNHIETYEMDQPRLIMRFLPAPGAYWAGKVKIKCPETDLEAELHLISDSFIERFRGNNNRSIKGKIFESSSGNQLYNIFGHWDRTVMAKNIKTGELEVIYNAKENITGLKPPTVKNLEEVTESESTMVWSEVSEGILKKDWERAREAKIVVEEKQRASLKQREASGESWVPKHFLVVKDGKDWDCSPLQPTVPPAPLVIT.

It belongs to the OSBP family. In terms of tissue distribution, expressed in stems and flowers.

May be involved in the transport of sterols. This is Oxysterol-binding protein-related protein 4B (ORP4B) from Arabidopsis thaliana (Mouse-ear cress).